Reading from the N-terminus, the 302-residue chain is Probable protein ABIL4 (302 aa).

Disordered stretches follow at residues 151 to 179 and 220 to 256; these read PSTG…YPSA and LLGK…QPGF. Over residues 161–170 the composition is skewed to polar residues; sequence ARLQTDNGQD.

It belongs to the ABI family. As to quaternary structure, binds SCAR.

It is found in the cytoplasm. It localises to the cytoskeleton. Its function is as follows. Involved in regulation of actin and microtubule organization. Part of a WAVE complex that activates the Arp2/3 complex. This is Probable protein ABIL4 from Oryza sativa subsp. japonica (Rice).